The primary structure comprises 187 residues: MKLLLLCLGLILVCAQQEENSDVAIRNFDISKISGEWYSIFLASDVKEKIEENGSMRVFVDVIRALDNSSLYAEYQTKVNGECTEFPMVFDKTEEDGVYSLNYDGYNVFRISEFENDEHIILYLVNFDKDRPFQLFEFYAREPDVSPEIKEEFVKIVQKRGIVKENIIDLTKIDRCFQLRGNGVAQA.

The segment at residues 1-15 (MKLLLLCLGLILVCA) is a signal peptide (or 16, or 21). 2 N-linked (GlcNAc...) asparagine glycosylation sites follow: Asn-53 and Asn-68. A disulfide bridge links Cys-83 with Cys-176.

It belongs to the calycin superfamily. Lipocalin family. As to quaternary structure, homodimer. Several N-terminal ends may be due to cleavage by signal peptidase at different sites or may be generated by proteolytic processing of the secreted protein. Post-translationally, analysis of the sugar composition shows the presence of GalNAc, Gal, NeuAc, GlcNAc, and Man. May be also O-glycosylated. Expressed in liver and in sublingual and submaxillary salivary glands. Highly concentrated in secretory fluid such as saliva and urine as well as in hair dandruff extract.

Its subcellular location is the secreted. The chain is Major allergen Equ c 1 from Equus caballus (Horse).